Reading from the N-terminus, the 199-residue chain is Transcription regulator complex subunit bur6 (199 aa).

Positions 106–199 are disordered; the sequence is PPIKAERKTK…SEASSASGDE (94 aa). The segment covering 112-121 has biased composition (basic residues); that stretch reads RKTKRPRARR. Residues 185-199 are compositionally biased toward polar residues; that stretch reads SDKTTSEASSASGDE.

Belongs to the NC2 alpha/DRAP1 family.

The protein resides in the nucleus. Functionally, transcription regulator complex subunit that is essential for cell cycle progression. The sequence is that of Transcription regulator complex subunit bur6 from Schizosaccharomyces pombe (strain 972 / ATCC 24843) (Fission yeast).